The primary structure comprises 145 residues: D-aminoacyl-tRNA deacylase (145 aa).

A Gly-cisPro motif, important for rejection of L-amino acids motif is present at residues 137–138 (GP).

This sequence belongs to the DTD family. As to quaternary structure, homodimer.

Its subcellular location is the cytoplasm. The enzyme catalyses glycyl-tRNA(Ala) + H2O = tRNA(Ala) + glycine + H(+). It catalyses the reaction a D-aminoacyl-tRNA + H2O = a tRNA + a D-alpha-amino acid + H(+). Its function is as follows. An aminoacyl-tRNA editing enzyme that deacylates mischarged D-aminoacyl-tRNAs. Also deacylates mischarged glycyl-tRNA(Ala), protecting cells against glycine mischarging by AlaRS. Acts via tRNA-based rather than protein-based catalysis; rejects L-amino acids rather than detecting D-amino acids in the active site. By recycling D-aminoacyl-tRNA to D-amino acids and free tRNA molecules, this enzyme counteracts the toxicity associated with the formation of D-aminoacyl-tRNA entities in vivo and helps enforce protein L-homochirality. The protein is D-aminoacyl-tRNA deacylase of Erwinia tasmaniensis (strain DSM 17950 / CFBP 7177 / CIP 109463 / NCPPB 4357 / Et1/99).